We begin with the raw amino-acid sequence, 248 residues long: Serine/arginine-rich splicing factor 1 (248 aa).

Ser2 is modified (N-acetylserine). The residue at position 2 (Ser2) is a Phosphoserine. Positions 16–91 (CRIYVGNLPP…YRLRVEFPRS (76 aa)) constitute an RRM 1 domain. Lys30 is covalently cross-linked (Glycyl lysine isopeptide (Lys-Gly) (interchain with G-Cter in SUMO2)). At Lys38 the chain carries N6-acetyllysine; alternate. Lys38 participates in a covalent cross-link: Glycyl lysine isopeptide (Lys-Gly) (interchain with G-Cter in SUMO2); alternate. A disordered region spans residues 88 to 134 (FPRSGRGTGRGGGGGGGGGAPRGRYGPPSRRSENRVVVSGLPPSGSW). 3 positions are modified to asymmetric dimethylarginine; alternate: Arg93, Arg97, and Arg109. An omega-N-methylarginine; alternate mark is found at Arg93, Arg97, and Arg109. A compositionally biased stretch (gly residues) spans 93–108 (RGTGRGGGGGGGGGAP). Arg111 is modified (omega-N-methylarginine). Residues 121–195 (NRVVVSGLPP…ETAYIRVKVD (75 aa)) enclose the RRM 2 domain. Ser133 carries the post-translational modification Phosphoserine. Position 179 is an N6-acetyllysine (Lys179). The segment at 191 to 248 (RVKVDGPRSPSYGRSRSRSRSRSRNRSRSNSRSRSYSPRRSRGSPRYSPRHSRSRSRT) is disordered. Residues 198 to 247 (RSPSYGRSRSRSRSRSRNRSRSNSRSRSYSPRRSRGSPRYSPRHSRSRSR) form an interaction with SAFB1 region. Phosphoserine is present on residues Ser199 and Ser201. Residue Tyr202 is modified to Phosphotyrosine. Phosphoserine occurs at positions 205, 207, 209, 231, 234, and 238. The segment covering 205-248 (SRSRSRSRSRNRSRSNSRSRSYSPRRSRGSPRYSPRHSRSRSRT) has biased composition (basic residues).

The protein belongs to the splicing factor SR family. As to quaternary structure, consists of two polypeptides of p32 and p33. Identified in the spliceosome C complex. Component of a ribonucleoprotein complex containing mRNAs and RNA-binding proteins including DDX5, HNRNPH2 and SRSF1 as well as splicing regulator ARVCF. In vitro, self-associates and binds SRSF2, SNRNP70 and U2AF1 but not U2AF2. Binds SREK1/SFRS12. Interacts with SAFB/SAFB1. Interacts with PSIP1/LEDGF. Interacts with RSRC1 (via Arg/Ser-rich domain). Interacts with ZRSR2/U2AF1-RS2. Interacts with CCDC55 (via C-terminus). Interacts with SRPK1 and a sliding docking interaction is essential for its sequential and processive phosphorylation by SRPK1. Interacts with NXF1. Interacts with CCNL1, CCNL2 and CDK11B. Interacts with RRP1B. Interacts (when phosphorylated in its RS domain) with TNPO3; promoting nuclear import. Interacts with ILDR1 (via C-terminus) and ILDR2. Phosphorylated by CLK1, CLK2, CLK3 and CLK4. Phosphorylated by SRPK1 at multiple serines in its RS domain via a directional (C-terminal to N-terminal) and a dual-track mechanism incorporating both processive phosphorylation (in which the kinase stays attached to the substrate after each round of phosphorylation) and distributive phosphorylation steps (in which the kinase and substrate dissociate after each phosphorylation event). The RS domain of SRSF1 binds to a docking groove in the large lobe of the kinase domain of SRPK1 and this induces certain structural changes in SRPK1 and/or RRM 2 domain of SRSF1, allowing RRM 2 to bind the kinase and initiate phosphorylation. The cycles continue for several phosphorylation steps in a processive manner (steps 1-8) until the last few phosphorylation steps (approximately steps 9-12). During that time, a mechanical stress induces the unfolding of the beta-4 motif in RRM 2, which then docks at the docking groove of SRPK1. This also signals RRM 2 to begin to dissociate, which facilitates SRSF1 dissociation after phosphorylation is completed. Post-translationally, asymmetrically dimethylated at arginines, probably by PRMT1, methylation promotes localization to nuclear speckles.

Its subcellular location is the cytoplasm. The protein resides in the nucleus speckle. Functionally, plays a role in preventing exon skipping, ensuring the accuracy of splicing and regulating alternative splicing. Interacts with other spliceosomal components, via the RS domains, to form a bridge between the 5'- and 3'-splice site binding components, U1 snRNP and U2AF. Can stimulate binding of U1 snRNP to a 5'-splice site-containing pre-mRNA. Binds to purine-rich RNA sequences, either the octamer, 5'-RGAAGAAC-3' (r=A or G) or the decamers, AGGACAGAGC/AGGACGAAGC. Binds preferentially to the 5'-CGAGGCG-3' motif in vitro. Three copies of the octamer constitute a powerful splicing enhancer in vitro, the ASF/SF2 splicing enhancer (ASE) which can specifically activate ASE-dependent splicing. May function as export adapter involved in mRNA nuclear export through the TAP/NXF1 pathway. This is Serine/arginine-rich splicing factor 1 (SRSF1) from Pongo abelii (Sumatran orangutan).